A 291-amino-acid polypeptide reads, in one-letter code: Urease accessory protein UreD (291 aa).

Belongs to the UreD family. As to quaternary structure, ureD, UreF and UreG form a complex that acts as a GTP-hydrolysis-dependent molecular chaperone, activating the urease apoprotein by helping to assemble the nickel containing metallocenter of UreC. The UreE protein probably delivers the nickel.

The protein resides in the cytoplasm. In terms of biological role, required for maturation of urease via the functional incorporation of the urease nickel metallocenter. This is Urease accessory protein UreD from Polynucleobacter asymbioticus (strain DSM 18221 / CIP 109841 / QLW-P1DMWA-1) (Polynucleobacter necessarius subsp. asymbioticus).